An 82-amino-acid polypeptide reads, in one-letter code: UPF0291 protein LJ_1507 (82 aa).

The segment at 61–82 (DGKEVTSEKAKEAQRRKGLRKD) is disordered.

Belongs to the UPF0291 family.

Its subcellular location is the cytoplasm. The polypeptide is UPF0291 protein LJ_1507 (Lactobacillus johnsonii (strain CNCM I-12250 / La1 / NCC 533)).